Reading from the N-terminus, the 93-residue chain is Large ribosomal subunit protein uL23cz/uL23cy (93 aa).

It belongs to the universal ribosomal protein uL23 family. Part of the 50S ribosomal subunit.

The protein resides in the plastid. It localises to the chloroplast. Functionally, binds to 23S rRNA. This chain is Large ribosomal subunit protein uL23cz/uL23cy (rpl23-A), found in Nandina domestica (Heavenly bamboo).